Reading from the N-terminus, the 430-residue chain is tRNA(Ile)-lysidine synthase (430 aa).

Residue 27–32 participates in ATP binding; the sequence is SGGSDS.

This sequence belongs to the tRNA(Ile)-lysidine synthase family.

It localises to the cytoplasm. It catalyses the reaction cytidine(34) in tRNA(Ile2) + L-lysine + ATP = lysidine(34) in tRNA(Ile2) + AMP + diphosphate + H(+). Functionally, ligates lysine onto the cytidine present at position 34 of the AUA codon-specific tRNA(Ile) that contains the anticodon CAU, in an ATP-dependent manner. Cytidine is converted to lysidine, thus changing the amino acid specificity of the tRNA from methionine to isoleucine. The polypeptide is tRNA(Ile)-lysidine synthase (Rickettsia akari (strain Hartford)).